We begin with the raw amino-acid sequence, 423 residues long: UDP-N-acetylglucosamine 1-carboxyvinyltransferase 2 (423 aa).

A phosphoenolpyruvate-binding site is contributed by 23 to 24 (KN). Arginine 96 provides a ligand contact to UDP-N-acetyl-alpha-D-glucosamine. Cysteine 120 functions as the Proton donor in the catalytic mechanism. Cysteine 120 carries the 2-(S-cysteinyl)pyruvic acid O-phosphothioketal modification. UDP-N-acetyl-alpha-D-glucosamine contacts are provided by residues 125–129 (RPIDL), aspartate 309, and valine 331.

This sequence belongs to the EPSP synthase family. MurA subfamily.

The protein localises to the cytoplasm. It catalyses the reaction phosphoenolpyruvate + UDP-N-acetyl-alpha-D-glucosamine = UDP-N-acetyl-3-O-(1-carboxyvinyl)-alpha-D-glucosamine + phosphate. Its pathway is cell wall biogenesis; peptidoglycan biosynthesis. In terms of biological role, cell wall formation. Adds enolpyruvyl to UDP-N-acetylglucosamine. This Streptococcus agalactiae serotype III (strain NEM316) protein is UDP-N-acetylglucosamine 1-carboxyvinyltransferase 2.